Here is a 285-residue protein sequence, read N- to C-terminus: 4-diphosphocytidyl-2-C-methyl-D-erythritol kinase (285 aa).

The active site involves lysine 12. An ATP-binding site is contributed by 94-104 (PAQAGMGGGSS). Aspartate 136 is a catalytic residue.

Belongs to the GHMP kinase family. IspE subfamily.

The catalysed reaction is 4-CDP-2-C-methyl-D-erythritol + ATP = 4-CDP-2-C-methyl-D-erythritol 2-phosphate + ADP + H(+). It functions in the pathway isoprenoid biosynthesis; isopentenyl diphosphate biosynthesis via DXP pathway; isopentenyl diphosphate from 1-deoxy-D-xylulose 5-phosphate: step 3/6. Catalyzes the phosphorylation of the position 2 hydroxy group of 4-diphosphocytidyl-2C-methyl-D-erythritol. The chain is 4-diphosphocytidyl-2-C-methyl-D-erythritol kinase from Paracidovorax citrulli (strain AAC00-1) (Acidovorax citrulli).